A 51-amino-acid polypeptide reads, in one-letter code: Sperm protamine P1 (51 aa).

This sequence belongs to the protamine P1 family. Testis.

It is found in the nucleus. The protein localises to the chromosome. Protamines substitute for histones in the chromatin of sperm during the haploid phase of spermatogenesis. They compact sperm DNA into a highly condensed, stable and inactive complex. This Nasalis larvatus (Proboscis monkey) protein is Sperm protamine P1 (PRM1).